We begin with the raw amino-acid sequence, 238 residues long: Tyrosine recombinase XerD-like (238 aa).

The Core-binding (CB) domain maps to 1–75 (MKLPNEIDEY…SANQYLLFLY (75 aa)). Residues 90 to 238 (VQKKSQTAQS…TITTLEKYYR (149 aa)) enclose the Tyr recombinase domain. Active-site residues include K154 and R204. Y236 functions as the O-(3'-phospho-DNA)-tyrosine intermediate in the catalytic mechanism.

Belongs to the 'phage' integrase family. XerD-like subfamily.

It localises to the cytoplasm. In terms of biological role, putative tyrosine recombinase. Not involved in the cutting and rejoining of the recombining DNA molecules on dif(SL) site. The chain is Tyrosine recombinase XerD-like (ynbA) from Lactococcus lactis subsp. lactis (strain IL1403) (Streptococcus lactis).